A 157-amino-acid chain; its full sequence is uncharacterized protein (157 aa).

An N-acetyltransferase domain is found at leucine 9–threonine 146.

This is an uncharacterized protein from Bacillus cereus (strain AH187).